Consider the following 390-residue polypeptide: Homeobox protein Meis1 (390 aa).

The 84-residue stretch at 108 to 191 folds into the MEIS N-terminal domain; sequence GGDVCSSESF…PIDLVIDDRD (84 aa). The segment covering 188–202 has biased composition (basic and acidic residues); the sequence is DDRDGGSKSDSEDLT. Residues 188 to 279 form a disordered region; that stretch reads DDRDGGSKSD…KKRNKGRGIF (92 aa). A DNA-binding region (homeobox; TALE-type) is located at residues 272-334; sequence RNKGRGIFPK…NARRRIVQPM (63 aa). Residues 299–329 form an interaction with DNA region; it reads YPSEEQKKQLAQDTGLTILQVNNWFINARRR.

The protein belongs to the TALE/MEIS homeobox family. As to quaternary structure, interacts with pbx1 isoform b. As to expression, in the embryo, displays a broad expression pattern with high levels observed in tissues of neural cell fate such as midbrain, hindbrain, dorsal portion of the neural tube, and neural crest-derived branchial arches. Widely expressed in the adult with highest levels in brain and spleen.

The protein resides in the cytoplasm. Its subcellular location is the nucleus. Functionally, induces expression of a number of neural crest marker genes as part of a heterodimer with isoform b of pbx1, to specify neural crest cell fate. Binds to a highly conserved region in the promoter of the neural crest marker gene zic3. In Xenopus laevis (African clawed frog), this protein is Homeobox protein Meis1 (meis1).